The sequence spans 382 residues: Mannitol-1-phosphate 5-dehydrogenase (382 aa).

3–14 contributes to the NAD(+) binding site; sequence ALHFGAGNIGRG.

The protein belongs to the mannitol dehydrogenase family.

The enzyme catalyses D-mannitol 1-phosphate + NAD(+) = beta-D-fructose 6-phosphate + NADH + H(+). The sequence is that of Mannitol-1-phosphate 5-dehydrogenase from Pectobacterium atrosepticum (strain SCRI 1043 / ATCC BAA-672) (Erwinia carotovora subsp. atroseptica).